Reading from the N-terminus, the 228-residue chain is UPF0173 metal-dependent hydrolase Smar_0891 (228 aa).

The protein belongs to the UPF0173 family.

The protein is UPF0173 metal-dependent hydrolase Smar_0891 of Staphylothermus marinus (strain ATCC 43588 / DSM 3639 / JCM 9404 / F1).